Here is a 353-residue protein sequence, read N- to C-terminus: D-glycerol 3-phosphate phosphatase (353 aa).

The active-site Nucleophile is D14. Mg(2+)-binding residues include D14, D16, and D209. The active-site Proton donor is D16.

It belongs to the HAD-like hydrolase superfamily. As to quaternary structure, homodimer. Requires Mg(2+) as cofactor. Co(2+) is required as a cofactor. It depends on Mn(2+) as a cofactor.

The catalysed reaction is sn-glycerol 1-phosphate + H2O = glycerol + phosphate. It participates in glycerolipid metabolism. Dephosphorylates D-glycerol 3-phosphate (sn-glycerol 1-phosphate). Is the final enzyme involved in the recycling/catabolism of glycerophospholipid polar heads. To a lesser extent, is also able to act on glycerol 2-phosphate and D-ribulose 5-phosphate, but cannot use D-glyceraldehyde 3-phosphate, dihydroxyacetone-phosphate, UMP or GMP as substrates. In Mycobacterium tuberculosis (strain ATCC 25618 / H37Rv), this protein is D-glycerol 3-phosphate phosphatase.